The following is a 378-amino-acid chain: DNA primase small subunit PriS (378 aa).

Residues Asp98, Asp100, and Asp282 contribute to the active site.

It belongs to the eukaryotic-type primase small subunit family. In terms of assembly, heterodimer of a small subunit (PriS) and a large subunit (PriL). Mg(2+) serves as cofactor. The cofactor is Mn(2+).

In terms of biological role, catalytic subunit of DNA primase, an RNA polymerase that catalyzes the synthesis of short RNA molecules used as primers for DNA polymerase during DNA replication. The small subunit contains the primase catalytic core and has DNA synthesis activity on its own. Binding to the large subunit stabilizes and modulates the activity, increasing the rate of DNA synthesis while decreasing the length of the DNA fragments, and conferring RNA synthesis capability. The DNA polymerase activity may enable DNA primase to also catalyze primer extension after primer synthesis. May also play a role in DNA repair. This Methanosphaerula palustris (strain ATCC BAA-1556 / DSM 19958 / E1-9c) protein is DNA primase small subunit PriS.